The sequence spans 2293 residues: Protein Ycf2 B (2293 aa).

Position 1647-1654 (1647-1654 (GSIGTGRS)) interacts with ATP.

The protein belongs to the Ycf2 family.

It localises to the plastid. It is found in the chloroplast stroma. Functionally, probable ATPase of unknown function. Its presence in a non-photosynthetic plant (Epifagus virginiana) and experiments in tobacco indicate that it has an essential function which is probably not related to photosynthesis. This Crucihimalaya wallichii (Rock-cress) protein is Protein Ycf2 B.